The primary structure comprises 547 residues: Cytochrome P450 monooxygenase 81 (547 aa).

A run of 2 helical transmembrane segments spans residues 6–23 (IPTQ…LFLL) and 106–124 (AFFA…ATAG). Heme is bound at residue C483. Residues N503 and N516 are each glycosylated (N-linked (GlcNAc...) asparagine).

The protein belongs to the cytochrome P450 family. Heme serves as cofactor.

It is found in the membrane. Its pathway is secondary metabolite biosynthesis. In terms of biological role, cytochrome P450 monooxygenase that is able to use dehydroabietic acid as a substrate for oxidation. The sequence is that of Cytochrome P450 monooxygenase 81 from Postia placenta (strain ATCC 44394 / Madison 698-R) (Brown rot fungus).